Here is a 324-residue protein sequence, read N- to C-terminus: Putative S-adenosyl-L-methionine-dependent methyltransferase MUL_0818 (324 aa).

S-adenosyl-L-methionine contacts are provided by residues aspartate 138 and 167-168 (DL).

It belongs to the UPF0677 family.

Its function is as follows. Exhibits S-adenosyl-L-methionine-dependent methyltransferase activity. In Mycobacterium ulcerans (strain Agy99), this protein is Putative S-adenosyl-L-methionine-dependent methyltransferase MUL_0818.